Here is a 553-residue protein sequence, read N- to C-terminus: Transmembrane protein DDB_G0292058 (553 aa).

An N-terminal signal peptide occupies residues 1 to 26; it reads MIKINKILSLLIILLIINCNYQFVKA. 2 helical membrane passes run 80–100 and 137–157; these read ILLS…GIIF and VFIL…VFIT. Asn162, Asn171, Asn178, and Asn195 each carry an N-linked (GlcNAc...) asparagine glycan. The next 2 membrane-spanning stretches (helical) occupy residues 243 to 263 and 274 to 294; these read IIIV…VSAL and SIAL…HYPI. N-linked (GlcNAc...) asparagine glycosylation is found at Asn315, Asn332, Asn351, Asn396, Asn405, and Asn462. Residues 515 to 535 form a helical membrane-spanning segment; the sequence is LLIAPTAVFAILLTGLGITGI.

Its subcellular location is the membrane. The sequence is that of Transmembrane protein DDB_G0292058 from Dictyostelium discoideum (Social amoeba).